Reading from the N-terminus, the 301-residue chain is Acetylglutamate kinase (301 aa).

Residues 68–69, Arg90, and Asn195 each bind substrate; that span reads GG.

This sequence belongs to the acetylglutamate kinase family. ArgB subfamily.

It is found in the cytoplasm. The catalysed reaction is N-acetyl-L-glutamate + ATP = N-acetyl-L-glutamyl 5-phosphate + ADP. The protein operates within amino-acid biosynthesis; L-arginine biosynthesis; N(2)-acetyl-L-ornithine from L-glutamate: step 2/4. Functionally, catalyzes the ATP-dependent phosphorylation of N-acetyl-L-glutamate. The sequence is that of Acetylglutamate kinase from Pseudomonas entomophila (strain L48).